The primary structure comprises 171 residues: Cytochrome c oxidase subunit 5, mitochondrial (171 aa).

The transit peptide at 1-27 directs the protein to the mitochondrion; the sequence is MLRTPTVSALVRNVAVRAAKPTMAVRA. Over 28-100 the chain is Mitochondrial matrix; that stretch reads ASTMPISNPT…ALPPPGEQKK (73 aa). A helical transmembrane segment spans residues 101–123; sequence VLAYTVAGVFLSFVIFATMRAFA. At 124–171 the chain is on the mitochondrial intermembrane side; that stretch reads KPPPATMTKEWQEATNEFLKAQKSDPLTGLTSEGYNGKGHVQSPSASA. The tract at residues 145 to 171 is disordered; it reads QKSDPLTGLTSEGYNGKGHVQSPSASA.

Belongs to the cytochrome c oxidase IV family. In terms of assembly, component of the cytochrome c oxidase (complex IV, CIV), a multisubunit enzyme composed of 11 subunits. The complex is composed of a catalytic core of 3 subunits Cox1, Cox2 and Cox3, encoded in the mitochondrial DNA, and 8 supernumerary subunits Cox4, Cox5a/Cox5, Cox6, Cox7, Cox8, Cox7a/Cox9, Cox6b/Cox12 and Cox6a/Cox13, which are encoded in the nuclear genome. The complex exists as a monomer or a dimer and forms respiratory supercomplexes (SCs) in the inner mitochondrial membrane with NADH-ubiquinone oxidoreductase (complex I, CI) and ubiquinol-cytochrome c oxidoreductase (cytochrome b-c1 complex, complex III, CIII), resulting in various different assemblies (supercomplexes I(1)IV(1), I(1)III(3)IV(2), III(2)IV(1) and III(2)IV(2) as well as larger supercomplexes of compositions like I(1)III(2)IV(5-6)).

Its subcellular location is the mitochondrion inner membrane. It participates in energy metabolism; oxidative phosphorylation. Component of the cytochrome c oxidase, the last enzyme in the mitochondrial electron transport chain which drives oxidative phosphorylation. The respiratory chain contains 3 multisubunit complexes succinate dehydrogenase (complex II, CII), ubiquinol-cytochrome c oxidoreductase (cytochrome b-c1 complex, complex III, CIII) and cytochrome c oxidase (complex IV, CIV), that cooperate to transfer electrons derived from NADH and succinate to molecular oxygen, creating an electrochemical gradient over the inner membrane that drives transmembrane transport and the ATP synthase. Cytochrome c oxidase is the component of the respiratory chain that catalyzes the reduction of oxygen to water. Electrons originating from reduced cytochrome c in the intermembrane space (IMS) are transferred via the dinuclear copper A center (CU(A)) of Cox2 and heme A of Cox1 to the active site in Cox1, a binuclear center (BNC) formed by heme A3 and copper B (CU(B)). The BNC reduces molecular oxygen to 2 water molecules using 4 electrons from cytochrome c in the IMS and 4 protons from the mitochondrial matrix. The sequence is that of Cytochrome c oxidase subunit 5, mitochondrial (cya-4) from Neurospora crassa (strain ATCC 24698 / 74-OR23-1A / CBS 708.71 / DSM 1257 / FGSC 987).